A 195-amino-acid chain; its full sequence is Putative C-P lyase subunit protein HtxG (195 aa).

The protein belongs to the PhnH family.

In terms of biological role, belongs to an operon involved in hypophosphite oxidation. Exact function not known. The sequence is that of Putative C-P lyase subunit protein HtxG (htxG) from Stutzerimonas stutzeri (Pseudomonas stutzeri).